Here is a 459-residue protein sequence, read N- to C-terminus: tRNA modification GTPase MnmE (459 aa).

(6S)-5-formyl-5,6,7,8-tetrahydrofolate is bound by residues Arg23, Glu88, and Arg127. The 159-residue stretch at 223–381 (GLNTVIVGKP…FKEVIKELFF (159 aa)) folds into the TrmE-type G domain. Asn233 lines the K(+) pocket. GTP contacts are provided by residues 233-238 (NVGKSS), 252-258 (TDVPGTT), and 277-280 (DTAG). Ser237 is a binding site for Mg(2+). Positions 252, 254, and 257 each coordinate K(+). Thr258 contributes to the Mg(2+) binding site. Lys459 is a (6S)-5-formyl-5,6,7,8-tetrahydrofolate binding site.

This sequence belongs to the TRAFAC class TrmE-Era-EngA-EngB-Septin-like GTPase superfamily. TrmE GTPase family. Homodimer. Heterotetramer of two MnmE and two MnmG subunits. Requires K(+) as cofactor.

The protein localises to the cytoplasm. Its function is as follows. Exhibits a very high intrinsic GTPase hydrolysis rate. Involved in the addition of a carboxymethylaminomethyl (cmnm) group at the wobble position (U34) of certain tRNAs, forming tRNA-cmnm(5)s(2)U34. The sequence is that of tRNA modification GTPase MnmE from Clostridium novyi (strain NT).